The following is a 481-amino-acid chain: Zinc metalloproteinase/disintegrin (481 aa).

The N-terminal stretch at 1 to 20 (MIQVLLVTICLAVFPYQGSS) is a signal peptide. The propeptide occupies 21-190 (IILESGNVDD…KASQLYLTPE (170 aa)). Positions 197 to 392 (RHIELAIVVD…KKPQCILNAP (196 aa)) constitute a Peptidase M12B domain. Ca(2+) is bound by residues Glu-200 and Asp-284. Disulfide bonds link Cys-308–Cys-387, Cys-349–Cys-371, and Cys-351–Cys-354. His-333 contacts Zn(2+). The active site involves Glu-334. Zn(2+) is bound by residues His-337 and His-343. Ca(2+) contacts are provided by Cys-387 and Asn-390. The propeptide occupies 393–410 (LRTDTVSTPISGNEFLEA). Residues 400-481 (TPISGNEFLE…ADCPRNGLYG (82 aa)) form the Disintegrin domain. 6 cysteine pairs are disulfide-bonded: Cys-414–Cys-429, Cys-416–Cys-424, Cys-423–Cys-446, Cys-437–Cys-443, Cys-442–Cys-467, and Cys-455–Cys-474. The short motif at 459–461 (RGD) is the Cell attachment site element.

This sequence belongs to the venom metalloproteinase (M12B) family. P-II subfamily. P-IIa sub-subfamily. Monomer. Zn(2+) is required as a cofactor. Expressed by the venom gland.

Its subcellular location is the secreted. Functionally, impairs hemostasis in the envenomed animal. Its function is as follows. Inhibits platelet aggregation induced by ADP and collagen. Acts by inhibiting fibrinogen interaction with platelet receptors GPIIb/GPIIIa (ITGA2B/ITGB3). Has antitumor-growth activity. In Protobothrops jerdonii (Jerdon's pitviper), this protein is Zinc metalloproteinase/disintegrin.